The following is a 427-amino-acid chain: Enolase (427 aa).

Gln163 serves as a coordination point for (2R)-2-phosphoglycerate. The Proton donor role is filled by Glu205. Residues Asp242, Glu285, and Asp312 each coordinate Mg(2+). Residues Lys337, Arg366, Ser367, and Lys388 each contribute to the (2R)-2-phosphoglycerate site. The active-site Proton acceptor is Lys337.

This sequence belongs to the enolase family. The cofactor is Mg(2+).

The protein localises to the cytoplasm. It localises to the secreted. The protein resides in the cell surface. The catalysed reaction is (2R)-2-phosphoglycerate = phosphoenolpyruvate + H2O. The protein operates within carbohydrate degradation; glycolysis; pyruvate from D-glyceraldehyde 3-phosphate: step 4/5. Its function is as follows. Catalyzes the reversible conversion of 2-phosphoglycerate (2-PG) into phosphoenolpyruvate (PEP). It is essential for the degradation of carbohydrates via glycolysis. The chain is Enolase from Variovorax paradoxus (strain S110).